The following is a 156-amino-acid chain: Small ribosomal subunit protein uS7 (156 aa).

This sequence belongs to the universal ribosomal protein uS7 family. As to quaternary structure, part of the 30S ribosomal subunit. Contacts proteins S9 and S11.

Functionally, one of the primary rRNA binding proteins, it binds directly to 16S rRNA where it nucleates assembly of the head domain of the 30S subunit. Is located at the subunit interface close to the decoding center, probably blocks exit of the E-site tRNA. The chain is Small ribosomal subunit protein uS7 (rspG) from Streptomyces coelicolor (strain ATCC BAA-471 / A3(2) / M145).